An 876-amino-acid chain; its full sequence is Leucine--tRNA ligase (876 aa).

The 'HIGH' region signature appears at 42 to 52 (PYPSGKLHMGH). Residues 634–638 (KMSKS) carry the 'KMSKS' region motif. Lysine 637 lines the ATP pocket.

Belongs to the class-I aminoacyl-tRNA synthetase family.

It is found in the cytoplasm. It carries out the reaction tRNA(Leu) + L-leucine + ATP = L-leucyl-tRNA(Leu) + AMP + diphosphate. The chain is Leucine--tRNA ligase from Neisseria meningitidis serogroup C (strain 053442).